The primary structure comprises 444 residues: COP9 signalosome complex subunit 2 (444 aa).

The tract at residues Met1–Asp31 is disordered. In terms of domain architecture, PCI spans Ala255–Ser417.

This sequence belongs to the CSN2 family. In terms of assembly, component of the CSN complex, probably composed of CSN1b, alien/CSN2, CSN3, CSN4, CSN5, CSN6, CSN7 and CSN8. Interacts with Rpn6. In terms of tissue distribution, expressed during embryonic stages 11-14 in the muscle attachment sites (apodemes); pharynx attachment to the roof of the mouth and in the epidermis of the head for the dorsal and ventral prothoracic pharyngeal muscle attachment. From stage 16 onwards expression is seen in all thoracic and abdominal apodemes.

Its subcellular location is the cytoplasm. It is found in the nucleus. Component of the COP9 signalosome complex (CSN), a complex involved in various cellular and developmental processes. The CSN complex is an essential regulator of the ubiquitin (Ubl) conjugation pathway by mediating the deneddylation of the cullin subunits of the SCF-type E3 ligase complexes, leading to decrease the Ubl ligase activity of SCF. The CSN complex plays an essential role in oogenesis and embryogenesis and is required for proper photoreceptor R cell differentiation and promote lamina glial cell migration or axon targeting. It also promotes Ubl-dependent degradation of cyclin E (CycE) during early oogenesis. This Drosophila melanogaster (Fruit fly) protein is COP9 signalosome complex subunit 2.